Consider the following 306-residue polypeptide: Agmatinase (306 aa).

Histidine 126, aspartate 149, histidine 151, aspartate 153, aspartate 230, and aspartate 232 together coordinate Mn(2+).

This sequence belongs to the arginase family. Agmatinase subfamily. Requires Mn(2+) as cofactor.

The catalysed reaction is agmatine + H2O = urea + putrescine. The protein operates within amine and polyamine biosynthesis; putrescine biosynthesis via agmatine pathway; putrescine from agmatine: step 1/1. Its function is as follows. Catalyzes the formation of putrescine from agmatine. This chain is Agmatinase, found in Klebsiella pneumoniae (strain 342).